Here is a 356-residue protein sequence, read N- to C-terminus: NADH-quinone oxidoreductase subunit H (356 aa).

Transmembrane regions (helical) follow at residues 18–38 (IIMI…IAYI), 87–107 (GVFL…WAVI), 120–140 (VGIL…IMAG), 166–186 (IGFV…SAVV), 205–225 (ILNW…VSAL), 265–285 (AITT…LPPI), 292–312 (WVPG…LIAM), and 333–353 (FLPL…FAGI).

It belongs to the complex I subunit 1 family. NDH-1 is composed of 14 different subunits. Subunits NuoA, H, J, K, L, M, N constitute the membrane sector of the complex.

It localises to the cell inner membrane. It catalyses the reaction a quinone + NADH + 5 H(+)(in) = a quinol + NAD(+) + 4 H(+)(out). In terms of biological role, NDH-1 shuttles electrons from NADH, via FMN and iron-sulfur (Fe-S) centers, to quinones in the respiratory chain. The immediate electron acceptor for the enzyme in this species is believed to be ubiquinone. Couples the redox reaction to proton translocation (for every two electrons transferred, four hydrogen ions are translocated across the cytoplasmic membrane), and thus conserves the redox energy in a proton gradient. This subunit may bind ubiquinone. This is NADH-quinone oxidoreductase subunit H from Bradyrhizobium sp. (strain ORS 278).